The chain runs to 272 residues: NAD kinase (272 aa).

Catalysis depends on aspartate 50, which acts as the Proton acceptor. Residues 50–51 (DG), 126–127 (NE), arginine 152, aspartate 154, 165–170 (TAYNKS), and alanine 189 each bind NAD(+).

The protein belongs to the NAD kinase family. The cofactor is a divalent metal cation.

The protein resides in the cytoplasm. The catalysed reaction is NAD(+) + ATP = ADP + NADP(+) + H(+). Involved in the regulation of the intracellular balance of NAD and NADP, and is a key enzyme in the biosynthesis of NADP. Catalyzes specifically the phosphorylation on 2'-hydroxyl of the adenosine moiety of NAD to yield NADP. The sequence is that of NAD kinase from Streptococcus pneumoniae serotype 19F (strain G54).